The sequence spans 506 residues: Histidine ammonia-lyase (506 aa).

Positions 143 to 145 (ASG) form a cross-link, 5-imidazolinone (Ala-Gly). The residue at position 144 (Ser144) is a 2,3-didehydroalanine (Ser).

The protein belongs to the PAL/histidase family. Post-translationally, contains an active site 4-methylidene-imidazol-5-one (MIO), which is formed autocatalytically by cyclization and dehydration of residues Ala-Ser-Gly.

It localises to the cytoplasm. The enzyme catalyses L-histidine = trans-urocanate + NH4(+). It functions in the pathway amino-acid degradation; L-histidine degradation into L-glutamate; N-formimidoyl-L-glutamate from L-histidine: step 1/3. The chain is Histidine ammonia-lyase from Citrobacter koseri (strain ATCC BAA-895 / CDC 4225-83 / SGSC4696).